A 560-amino-acid polypeptide reads, in one-letter code: Leucine-rich repeat and IQ domain-containing protein 4 (560 aa).

Positions 1–20 (MSKDIKSVEHSPKIHQRNDP) are disordered. LRR repeat units follow at residues 23 to 47 (VNDR…IFTF), 48 to 70 (TELE…IQRL), 72 to 95 (NIRV…LLSS), 97 to 116 (ESLD…VVSF), 117 to 140 (LHAL…IFKN), 141 to 164 (LHHL…IVNQ), 166 to 187 (KLRE…LCVL), 188 to 210 (YTLE…IGHL), 212 to 233 (GLQK…LCQC), 234 to 256 (SQLS…FAEL), 258 to 281 (KMTE…RWTS), 283 to 301 (HLLY…SFRC), 302 to 325 (LVNL…ICAL), 326 to 348 (KNLE…LGSL), 350 to 371 (KLKI…VLSL), 374 to 397 (LEKL…IRKL), 398 to 422 (QSLK…SMPN), 424 to 443 (EVLD…ICQA), 444 to 466 (QALK…LDSL), and 468 to 489 (NLKV…VCAE). An IQ domain is found at 504–533 (RNIMATKIQAWWRGTMVQRGFGKFGELLKP). Residues 529–560 (ELLKPQKKGKTSPKDKKGKKDVKGKPGKGKKK) are disordered. Positions 533–560 (PQKKGKTSPKDKKGKKDVKGKPGKGKKK) are enriched in basic residues.

The chain is Leucine-rich repeat and IQ domain-containing protein 4 (LRRIQ4) from Homo sapiens (Human).